A 469-amino-acid polypeptide reads, in one-letter code: Glutamine synthetase (469 aa).

The GS beta-grasp domain maps to 13–97; it reads NEVKFVDLRF…IRCDILEPAT (85 aa). A GS catalytic domain is found at 105 to 469; it reads PRSIAKRAEE…PLEFELYYSV (365 aa). 2 residues coordinate Mg(2+): glutamate 130 and glutamate 132. Glutamate 208 is an ATP binding site. Mg(2+)-binding residues include glutamate 213 and glutamate 221. L-glutamate is bound by residues 265 to 266 and glycine 266; that span reads NG. Histidine 270 is a Mg(2+) binding site. ATP is bound by residues 272–274 and serine 274; that span reads HQS. L-glutamate contacts are provided by arginine 322, glutamate 328, and arginine 340. ATP-binding residues include arginine 340, arginine 345, and lysine 353. Mg(2+) is bound at residue glutamate 358. Residue arginine 360 participates in L-glutamate binding. Tyrosine 398 carries the post-translational modification O-AMP-tyrosine.

It belongs to the glutamine synthetase family. In terms of assembly, oligomer of 12 subunits arranged in the form of two hexameric ring. Requires Mg(2+) as cofactor.

Its subcellular location is the cytoplasm. The enzyme catalyses L-glutamate + NH4(+) + ATP = L-glutamine + ADP + phosphate + H(+). The activity of this enzyme could be controlled by adenylation under conditions of abundant glutamine. Functionally, catalyzes the ATP-dependent biosynthesis of glutamine from glutamate and ammonia. This is Glutamine synthetase (glnAv) from Vibrio cholerae serotype O1 (strain ATCC 39315 / El Tor Inaba N16961).